The chain runs to 155 residues: Short-chain-enoyl-CoA hydratase (155 aa).

This sequence belongs to the enoyl-CoA hydratase/isomerase family.

The enzyme catalyses a short-chain (3S)-3-hydroxyacyl-CoA = a short-chain (2E)-enoyl-CoA + H2O. The protein operates within lipid metabolism; butanoate metabolism. The protein is Short-chain-enoyl-CoA hydratase (crt) of Clostridioides difficile (Peptoclostridium difficile).